Reading from the N-terminus, the 121-residue chain is Holin-like protein CidA (121 aa).

3 consecutive transmembrane segments (helical) span residues 27–47 (VHLP…SLKF), 58–78 (GADF…VAVI), and 89–109 (IDLI…TGIL).

It belongs to the CidA/LrgA family. CidA subfamily.

The protein resides in the cell membrane. Its function is as follows. Increases the activity of extracellular murein hydrolases possibly by mediating their export via hole formation. Inhibited by the antiholin-like proteins LrgAB. In an unstressed cell, the LrgAB products probably inhibit the function of the CidA protein. When a cell is stressed by the addition of antibiotics or by other factors in the environment, CidA possibly oligomerizes within the bacterial cell membrane, creating lesions that disrupt the proton motive force, which in turn results in loss of cell viability. These lesions are also hypothesized to regulate the subsequent cell lysis by either allowing the murein hydrolases access to the cell wall substrate and/or regulating their activity by a possible change in the cell wall pH that results from loss of membrane potential. This is Holin-like protein CidA from Bacillus cytotoxicus (strain DSM 22905 / CIP 110041 / 391-98 / NVH 391-98).